We begin with the raw amino-acid sequence, 555 residues long: Urocanate hydratase (555 aa).

Residues 52–53 (GG), Gln-130, 176–178 (GMG), Glu-196, Arg-201, 242–243 (NA), 263–267 (QTSAH), 272–273 (YL), and Tyr-321 contribute to the NAD(+) site. Residue Cys-409 is part of the active site. Gly-491 contributes to the NAD(+) binding site.

This sequence belongs to the urocanase family. The cofactor is NAD(+).

It localises to the cytoplasm. The enzyme catalyses 4-imidazolone-5-propanoate = trans-urocanate + H2O. Its pathway is amino-acid degradation; L-histidine degradation into L-glutamate; N-formimidoyl-L-glutamate from L-histidine: step 2/3. In terms of biological role, catalyzes the conversion of urocanate to 4-imidazolone-5-propionate. This Nocardioides sp. (strain ATCC BAA-499 / JS614) protein is Urocanate hydratase.